A 48-amino-acid chain; its full sequence is Large ribosomal subunit protein bL33A (48 aa).

Belongs to the bacterial ribosomal protein bL33 family.

This is Large ribosomal subunit protein bL33A from Bacillus mycoides (strain KBAB4) (Bacillus weihenstephanensis).